The following is a 438-amino-acid chain: Cyanidin-3-O-glucoside 2-O-glucuronosyltransferase (438 aa).

Residues Ser-264, 315 to 316, 333 to 341, and 355 to 358 contribute to the UDP-alpha-D-glucuronate site; these read WV, HCGWSSTME, and QFDQ.

This sequence belongs to the UDP-glycosyltransferase family. As to quaternary structure, monomer. In terms of tissue distribution, expressed in petals. Not detected in sepals, stems, leaves, tubular corollas and white petals.

The protein localises to the cytoplasm. The catalysed reaction is cyanidin 3-O-beta-D-glucoside + UDP-alpha-D-glucuronate = cyanidin 3-O-(2-O-beta-D-glucuronosyl)-beta-D-glucoside + UDP + H(+). Inhibited by copper, mercury, UDP, UTP and partially by calcium, cadmium, iron and UMP. Not affected by cobalt, magnesium, manganese, zinc, nickel, tin, uridine, sadium malonate and glucose. Functionally, involved in the production of glucuronosylated anthocyanins that are the origin of the red coloration of flowers. Can use cyanidin 3-O-6''-O-malonylglucoside, cyanidin 3-O-glucoside and delphinidin 3-O-glucosideas substrates, but not pelargonidin 3-O-glucoside, cyanidin 3-O-3'',6''-O-dimalonylglucoside, pelargonidin 3,5-O-diglucoside, pelargonidin 3-O-6''-O-malonylglucoside-5-O-glucoside, quercetin 3-O-glucoside, quercetin 3-O-6''-O-malonylglucoside, daidzin, genistin,7-O-6''-O-malonylglucosides of daidzein and genistein, cyanidin, quercetin, daidzein, genistein p-Nitrophenyl beta-D-glucopyranoside, beta-estradiol, 17alpha-estradiol, 1-naphthol, 2-naphthol, 4-methylumbelliferone, and p-nitrophenol. Highly specific for UDP-glucuronate (UDP-GlcUA). Arg-25 is decisive with respect to UDP-sugar specificity. The polypeptide is Cyanidin-3-O-glucoside 2-O-glucuronosyltransferase (UGAT) (Bellis perennis (English daisy)).